The following is a 427-amino-acid chain: 3-phosphoshikimate 1-carboxyvinyltransferase (427 aa).

3-phosphoshikimate-binding residues include K20, S21, and R25. A phosphoenolpyruvate-binding site is contributed by K20. Phosphoenolpyruvate contacts are provided by G92 and R120. Residues S166, Q168, D312, and K339 each contribute to the 3-phosphoshikimate site. Q168 serves as a coordination point for phosphoenolpyruvate. D312 (proton acceptor) is an active-site residue. The phosphoenolpyruvate site is built by R343 and R385.

Belongs to the EPSP synthase family. In terms of assembly, monomer.

It localises to the cytoplasm. It carries out the reaction 3-phosphoshikimate + phosphoenolpyruvate = 5-O-(1-carboxyvinyl)-3-phosphoshikimate + phosphate. Its pathway is metabolic intermediate biosynthesis; chorismate biosynthesis; chorismate from D-erythrose 4-phosphate and phosphoenolpyruvate: step 6/7. Catalyzes the transfer of the enolpyruvyl moiety of phosphoenolpyruvate (PEP) to the 5-hydroxyl of shikimate-3-phosphate (S3P) to produce enolpyruvyl shikimate-3-phosphate and inorganic phosphate. In Streptococcus pyogenes serotype M28 (strain MGAS6180), this protein is 3-phosphoshikimate 1-carboxyvinyltransferase.